Reading from the N-terminus, the 491-residue chain is Probable CtpA-like serine protease (491 aa).

Positions 1 to 22 (MNDHQKNHATSQDDNTKSTPSK) are disordered. Polar residues predominate over residues 8 to 22 (HATSQDDNTKSTPSK). A helical transmembrane segment spans residues 31 to 51 (LWHFILVILGIILLTSIITVV). The region spanning 119–201 (TKQFNEGVSG…TYVTLTIKRG (83 aa)) is the PDZ domain. Active-site charge relay system residues include Ser324, Asp335, and Lys349.

It belongs to the peptidase S41A family.

Its subcellular location is the cell membrane. This is Probable CtpA-like serine protease from Staphylococcus epidermidis (strain ATCC 12228 / FDA PCI 1200).